The primary structure comprises 241 residues: Carboxysome assembly protein CcmN (241 aa).

Residues 123–206 (GASSPTTDSV…PTAPTVVTTA (84 aa)) are disordered. The span at 185 to 195 (QISSNRSPGES) shows a compositional bias: polar residues. Positions 196-206 (TPTAPTVVTTA) are enriched in low complexity. The Encapsulation peptide signature appears at 219-241 (VVGQVYINQLLLTLFPERRYFSS).

It belongs to the CcmN family. As to quaternary structure, interacts with full-length and the N-terminal 249 residues of CcmM; a probable CcmM-CcaA-CcmN complex can also be isolated. Interacts with CcmK.

The protein localises to the carboxysome. In terms of biological role, required for carboxysome formation; the N-terminus interacts with CcmM which itself binds RuBisCO (ribulose bisphosphate carboxylase, rbcL-rbcS). May also contact shell protein CcmK to help assemble the carboxysome. Beta-carboxysome assembly initiates when soluble RuBisCO is condensed into a liquid matrix in a pre-carboxysome by the RbcS-like domains of probably both forms of CcmM. CcmN interacts with the N-terminus of full-length CcmM, and then recruits the CcmK major shell protein via CcmN's encapsulation peptide. Shell formation requires CcmK proteins and CcmO. CcmL caps the otherwise elongated carboxysome. Once fully encapsulated carboxysomes are formed, they migrate within the cell probably via interactions with the cytoskeleton. In Synechocystis sp. (strain ATCC 27184 / PCC 6803 / Kazusa), this protein is Carboxysome assembly protein CcmN.